The primary structure comprises 638 residues: Leucine-rich repeat-containing protein 63 (638 aa).

2 disordered regions span residues 220–241 (VPST…PSAA) and 306–325 (TTAA…TVQR). LRR repeat units follow at residues 389 to 412 (AFQL…ILYL), 413 to 435 (QNLQ…IHLL), 437 to 458 (YLRI…LFCL), 460 to 481 (YLEE…IQKL), 482 to 504 (RSLE…ILKL), and 532 to 556 (LTQI…VRKS).

This is Leucine-rich repeat-containing protein 63 from Mus musculus (Mouse).